The primary structure comprises 255 residues: Post-GPI attachment to proteins factor 2 (255 aa).

Helical transmembrane passes span 25 to 45 (LAALSLPLGGFFFCVVWSLLF), 80 to 100 (LAIFLHLPLRLAVAKIYLEYY), 111 to 131 (LGILACFLNVVEDLALFCLSF), 143 to 163 (NAFVVFIACSECYMLMSYLLN), 185 to 205 (LFLVNVLAFGLAGYCFVRHNA), and 209 to 229 (AGVYTFFALFEYIVVLTNMGF).

The protein belongs to the PGAP2 family.

It localises to the golgi apparatus membrane. The protein resides in the endoplasmic reticulum membrane. Functionally, involved in the lipid remodeling steps of GPI-anchor maturation. Required for stable expression of GPI-anchored proteins at the cell surface. The protein is Post-GPI attachment to proteins factor 2 of Drosophila pseudoobscura pseudoobscura (Fruit fly).